The sequence spans 353 residues: Ribosomal RNA small subunit methyltransferase H (353 aa).

Residues 49-51 (GGH), aspartate 68, phenylalanine 95, aspartate 126, and glutamine 133 each bind S-adenosyl-L-methionine.

The protein belongs to the methyltransferase superfamily. RsmH family.

It is found in the cytoplasm. It carries out the reaction cytidine(1402) in 16S rRNA + S-adenosyl-L-methionine = N(4)-methylcytidine(1402) in 16S rRNA + S-adenosyl-L-homocysteine + H(+). Its function is as follows. Specifically methylates the N4 position of cytidine in position 1402 (C1402) of 16S rRNA. The chain is Ribosomal RNA small subunit methyltransferase H from Corynebacterium urealyticum (strain ATCC 43042 / DSM 7109).